A 631-amino-acid polypeptide reads, in one-letter code: Beta-galactosidase-1-like protein 3 (631 aa).

E203 acts as the Proton donor in catalysis. The active-site Nucleophile is the E277.

Belongs to the glycosyl hydrolase 35 family.

In Rattus norvegicus (Rat), this protein is Beta-galactosidase-1-like protein 3 (Glb1l3).